Here is a 396-residue protein sequence, read N- to C-terminus: S-adenosylmethionine synthase 4 (396 aa).

Glu12 is a binding site for Mg(2+). His18 contacts ATP. Glu46 serves as a coordination point for K(+). Residues Glu59 and Gln102 each coordinate L-methionine. ATP contacts are provided by residues 170-172 (DGK), 238-241 (SGRF), Asp249, 255-256 (RK), Ala272, Lys276, and Lys280. Asp249 contributes to the L-methionine binding site. L-methionine is bound at residue Lys280.

Belongs to the AdoMet synthase family. As to quaternary structure, homotetramer. Mn(2+) serves as cofactor. It depends on Mg(2+) as a cofactor. Requires Co(2+) as cofactor. The cofactor is K(+).

It localises to the cytoplasm. The enzyme catalyses L-methionine + ATP + H2O = S-adenosyl-L-methionine + phosphate + diphosphate. It functions in the pathway amino-acid biosynthesis; S-adenosyl-L-methionine biosynthesis; S-adenosyl-L-methionine from L-methionine: step 1/1. Its function is as follows. Catalyzes the formation of S-adenosylmethionine from methionine and ATP. The reaction comprises two steps that are both catalyzed by the same enzyme: formation of S-adenosylmethionine (AdoMet) and triphosphate, and subsequent hydrolysis of the triphosphate. This Hordeum vulgare (Barley) protein is S-adenosylmethionine synthase 4 (SAM4).